Consider the following 517-residue polypeptide: Cytochrome b mRNA maturase bI3 (517 aa).

Topologically, residues methionine 1–asparagine 31 are mitochondrial matrix. The cytochrome b stretch occupies residues methionine 1–phenylalanine 169. A helical membrane pass occupies residues methionine 32–methionine 52. Topologically, residues histidine 53–asparagine 84 are mitochondrial intermembrane. A helical membrane pass occupies residues glycine 85–serine 105. At tyrosine 106–asparagine 115 the chain is on the mitochondrial matrix side. A helical transmembrane segment spans residues valine 116–tyrosine 136. Topologically, residues glycine 137 to threonine 145 are mitochondrial intermembrane. A helical membrane pass occupies residues valine 146–tryptophan 166. At glycine 167–serine 184 the chain is on the mitochondrial matrix side. The interval asparagine 170 to tyrosine 517 is maturase. The helical transmembrane segment at valine 185–tyrosine 205 threads the bilayer. At asparagine 206 to lysine 224 the chain is on the mitochondrial intermembrane side. The chain crosses the membrane as a helical span at residues leucine 225–tyrosine 242. At serine 243–tyrosine 517 the chain is on the mitochondrial matrix side.

This sequence in the N-terminal section; belongs to the cytochrome b family. It in the C-terminal section; belongs to the LAGLIDADG endonuclease family. As to quaternary structure, forms a ribonucleoprotein complex composed of maturase bI3 and 2 dimers of MRS1 that assemble around the bI3 RNA.

The protein resides in the mitochondrion inner membrane. Functionally, mitochondrial mRNA maturase required for splicing of intron 3 of the cytochrome b (COB) gene, containing its own coding sequence. In vivo splicing requires the formation of a ribonucleoprotein complex together with the imported mitochondrial RNA-splicing protein MRS1. The complex seems to stimulate the intrinsic ribozyme activity of intron bI3 through binding to and stabilizing specific secondary and tertiary structure elements in the RNA. This chain is Cytochrome b mRNA maturase bI3 (BI3), found in Saccharomyces cerevisiae (strain ATCC 204508 / S288c) (Baker's yeast).